A 229-amino-acid polypeptide reads, in one-letter code: Potassium/proton antiporter CemA (229 aa).

3 helical membrane-spanning segments follow: residues 6–26 (AFIPFFYFLSIVFLPWLISLC), 107–127 (ILHFSTNLISFVILSGYSFWG), and 189–209 (ILSGLVSTFPVILDTIFKYWI).

This sequence belongs to the CemA family.

Its subcellular location is the plastid. The protein resides in the chloroplast inner membrane. It catalyses the reaction K(+)(in) + H(+)(out) = K(+)(out) + H(+)(in). In terms of biological role, contributes to K(+)/H(+) antiport activity by supporting proton efflux to control proton extrusion and homeostasis in chloroplasts in a light-dependent manner to modulate photosynthesis. Prevents excessive induction of non-photochemical quenching (NPQ) under continuous-light conditions. Indirectly promotes efficient inorganic carbon uptake into chloroplasts. This Arabidopsis thaliana (Mouse-ear cress) protein is Potassium/proton antiporter CemA.